The primary structure comprises 152 residues: MTSTLNTLKSNSGSRKKKLRKGRGIAAGQGASCGFGMRGQKSRSGRPTRPGFEGGQMPLYRRVPKLKHFEIINQKNFSIINLEKLNDFKDNDTVNIDSLVKKGLIFKPKFPLKILGNGKINVKLKVQAHSFTKVAKQKIEDAGGSCELINNK.

Residues 1–57 (MTSTLNTLKSNSGSRKKKLRKGRGIAAGQGASCGFGMRGQKSRSGRPTRPGFEGGQM) form a disordered region. The segment covering 14–23 (SRKKKLRKGR) has biased composition (basic residues). The span at 25-37 (IAAGQGASCGFGM) shows a compositional bias: gly residues.

It belongs to the universal ribosomal protein uL15 family. Part of the 50S ribosomal subunit.

Binds to the 23S rRNA. The polypeptide is Large ribosomal subunit protein uL15 (Prochlorococcus marinus (strain AS9601)).